A 64-amino-acid chain; its full sequence is Mitotic-spindle organizing protein 1 (64 aa).

Belongs to the MOZART1 family. In terms of assembly, part of the gamma-tubulin complex. Interacts directly with alp6/GPC3.

It is found in the cytoplasm. Its subcellular location is the cytoskeleton. The protein localises to the microtubule organizing center. It localises to the spindle pole body. Its function is as follows. Required for gamma-tubulin complex recruitment to the microtubule organizing center (MTOC). In Schizosaccharomyces pombe (strain 972 / ATCC 24843) (Fission yeast), this protein is Mitotic-spindle organizing protein 1 (mzt1).